A 294-amino-acid polypeptide reads, in one-letter code: Flavin-dependent thymidylate synthase (294 aa).

In terms of domain architecture, ThyX spans 27–250 (GFIRVIDYMG…PFTYEAFEEY (224 aa)). FAD is bound by residues threonine 73, 96–98 (RHR), and glutamate 104. Residues 93-96 (QWIR), 104-108 (EYSAR), and arginine 189 each bind dUMP. The ThyX motif signature appears at 96–106 (RHRTASVNEYS). Residues 205–207 (NLH) and histidine 211 contribute to the FAD site. Arginine 216 serves as a coordination point for dUMP. Arginine 216 functions as the Involved in ionization of N3 of dUMP, leading to its activation in the catalytic mechanism.

It belongs to the thymidylate synthase ThyX family. In terms of assembly, homotetramer. Requires FAD as cofactor.

It carries out the reaction dUMP + (6R)-5,10-methylene-5,6,7,8-tetrahydrofolate + NADPH + H(+) = dTMP + (6S)-5,6,7,8-tetrahydrofolate + NADP(+). It participates in pyrimidine metabolism; dTTP biosynthesis. Its function is as follows. Catalyzes the reductive methylation of 2'-deoxyuridine-5'-monophosphate (dUMP) to 2'-deoxythymidine-5'-monophosphate (dTMP) while utilizing 5,10-methylenetetrahydrofolate (mTHF) as the methyl donor, and NADPH and FADH(2) as the reductant. The sequence is that of Flavin-dependent thymidylate synthase from Rickettsia bellii (strain RML369-C).